The following is a 99-amino-acid chain: UPF0122 protein UUR10_0158 (99 aa).

Belongs to the UPF0122 family.

In terms of biological role, might take part in the signal recognition particle (SRP) pathway. This is inferred from the conservation of its genetic proximity to ftsY/ffh. May be a regulatory protein. In Ureaplasma urealyticum serovar 10 (strain ATCC 33699 / Western), this protein is UPF0122 protein UUR10_0158.